The chain runs to 162 residues: Cytochrome c-type biogenesis protein CcmE (162 aa).

Topologically, residues 1–8 (MNPVRKKR) are cytoplasmic. The chain crosses the membrane as a helical; Signal-anchor for type II membrane protein span at residues 9-29 (LIIVLAILVGVGAAVGLALSA). Residues 30–162 (LQQNINLFYT…GETSYNQEGK (133 aa)) are Periplasmic-facing. Histidine 124 and tyrosine 128 together coordinate heme. Positions 139–148 (DSGQLKHYEN) are enriched in basic and acidic residues. The segment at 139–162 (DSGQLKHYENGKAAGETSYNQEGK) is disordered.

Belongs to the CcmE/CycJ family.

The protein localises to the cell inner membrane. Functionally, heme chaperone required for the biogenesis of c-type cytochromes. Transiently binds heme delivered by CcmC and transfers the heme to apo-cytochromes in a process facilitated by CcmF and CcmH. The chain is Cytochrome c-type biogenesis protein CcmE from Pseudomonas paraeruginosa (strain DSM 24068 / PA7) (Pseudomonas aeruginosa (strain PA7)).